The primary structure comprises 372 residues: NAD(P)H-quinone oxidoreductase subunit 1 (372 aa).

Helical transmembrane passes span 27-47 (AIWMPLPMFLMIIAATVGVLV), 97-117 (WLFLFGPILVVMPVFVSYLIV), 130-150 (VGIFLWISLSSIAPIGLLMAG), 176-196 (LALSVLAIVMMSNSLSTIDIV), 204-224 (ILGWNIWRQPVGFLIFWIAAL), 254-274 (FALFYVGSYVNLVLSALVFAV), 308-328 (SLGITMTVLKAYFLIFIAILL), and 351-371 (VSLVNLLLTAALKLAFPFAFG).

Belongs to the complex I subunit 1 family. In terms of assembly, NDH-1 is composed of at least 11 different subunits.

The protein localises to the cellular thylakoid membrane. The enzyme catalyses a plastoquinone + NADH + (n+1) H(+)(in) = a plastoquinol + NAD(+) + n H(+)(out). It catalyses the reaction a plastoquinone + NADPH + (n+1) H(+)(in) = a plastoquinol + NADP(+) + n H(+)(out). In terms of biological role, NDH-1 shuttles electrons from an unknown electron donor, via FMN and iron-sulfur (Fe-S) centers, to quinones in the respiratory and/or the photosynthetic chain. The immediate electron acceptor for the enzyme in this species is believed to be plastoquinone. Couples the redox reaction to proton translocation, and thus conserves the redox energy in a proton gradient. The polypeptide is NAD(P)H-quinone oxidoreductase subunit 1 (Microcystis aeruginosa (strain NIES-843 / IAM M-2473)).